A 122-amino-acid chain; its full sequence is Large ribosomal subunit protein uL14 (122 aa).

This sequence belongs to the universal ribosomal protein uL14 family. As to quaternary structure, part of the 50S ribosomal subunit. Forms a cluster with proteins L3 and L19. In the 70S ribosome, L14 and L19 interact and together make contacts with the 16S rRNA in bridges B5 and B8.

Binds to 23S rRNA. Forms part of two intersubunit bridges in the 70S ribosome. The protein is Large ribosomal subunit protein uL14 of Solidesulfovibrio magneticus (strain ATCC 700980 / DSM 13731 / RS-1) (Desulfovibrio magneticus).